A 713-amino-acid chain; its full sequence is Polyribonucleotide nucleotidyltransferase (713 aa).

The Mg(2+) site is built by aspartate 498 and aspartate 504. One can recognise a KH domain in the interval 565-631 (PRILSLKVPV…RIEDLTREAK (67 aa)). Residues 633–701 (GEIYEGTVTR…ERGKIDLIRP (69 aa)) enclose the S1 motif domain.

It belongs to the polyribonucleotide nucleotidyltransferase family. Requires Mg(2+) as cofactor.

The protein localises to the cytoplasm. The catalysed reaction is RNA(n+1) + phosphate = RNA(n) + a ribonucleoside 5'-diphosphate. In terms of biological role, involved in mRNA degradation. Catalyzes the phosphorolysis of single-stranded polyribonucleotides processively in the 3'- to 5'-direction. The protein is Polyribonucleotide nucleotidyltransferase of Thermus thermophilus (strain ATCC 27634 / DSM 579 / HB8).